Reading from the N-terminus, the 413-residue chain is Putative syntaxin-5 (413 aa).

Residues 1–391 are Cytoplasmic-facing; the sequence is MSDFHNIRSR…RYLQNISKNR (391 aa). The interval 257 to 290 is disordered; that stretch reads KNRRDKFSSGAAVPMGLPSSSSGANVRSKLLQDD. The 63-residue stretch at 321–383 folds into the t-SNARE coiled-coil homology domain; that stretch reads LEYAQARSNT…DMAHSELVRY (63 aa). The chain crosses the membrane as a helical; Anchor for type IV membrane protein span at residues 392-412; the sequence is WLMIQVFGVLMVFFVVFVLFL. Threonine 413 is a topological domain (extracellular).

The protein belongs to the syntaxin family.

The protein localises to the membrane. Functionally, potentially involved in docking of synaptic vesicles at presynaptic active zones. The chain is Putative syntaxin-5 (syx-5) from Caenorhabditis elegans.